Here is a 182-residue protein sequence, read N- to C-terminus: MALNLCTSPKWIGTTVFDSASSSKPSLASSFSTTSFSSSILCSKRVGLQRLSLRRSISVSVRSSLETAGPTVTVGKVTEVNKDTFWPIVNAAGDKTVVLDMFTKWCGPCKVIAPLYEELSQKYLDVVFLKLDCNQDNKSLAKELGIKVVPTFKILKDNKIVKEVTGAKFDDLVAAIDTVRSS.

A chloroplast-targeting transit peptide spans 1–69; the sequence is MALNLCTSPK…SVRSSLETAG (69 aa). The region spanning 70-181 is the Thioredoxin domain; sequence PTVTVGKVTE…LVAAIDTVRS (112 aa). Catalysis depends on nucleophile residues Cys106 and Cys109. An intrachain disulfide couples Cys106 to Cys109.

It belongs to the thioredoxin family. Plant F-type subfamily. In terms of assembly, forms a complex with heterodimeric ferredoxin-thioredoxin reductase (FTR) and ferredoxin.

The protein localises to the plastid. Its subcellular location is the chloroplast. Participates in various redox reactions through the reversible oxidation of the active center dithiol to a disulfide. The F form is known to activate a number of enzymes of the photosynthetic carbon cycle. This Pisum sativum (Garden pea) protein is Thioredoxin F-type, chloroplastic.